A 301-amino-acid chain; its full sequence is Probable alpha-L-glutamate ligase (301 aa).

Residues Leu104–Glu287 form the ATP-grasp domain. ATP is bound by residues Lys141, Glu178–Phe179, Asp187, and Arg211–Asn213. Mg(2+) contacts are provided by Asp248, Glu260, and Asn262. Residues Asp248, Glu260, and Asn262 each contribute to the Mn(2+) site.

It belongs to the RimK family. The cofactor is Mg(2+). It depends on Mn(2+) as a cofactor.

The chain is Probable alpha-L-glutamate ligase from Teredinibacter turnerae (strain ATCC 39867 / T7901).